A 157-amino-acid chain; its full sequence is Cytochrome c-type biogenesis protein CcmE (157 aa).

At 1–7 (MTPRQRR) the chain is on the cytoplasmic side. A helical; Signal-anchor for type II membrane protein transmembrane segment spans residues 8–28 (LGLLAAALACCGVAAALVLNA). The Periplasmic segment spans residues 29–157 (FRANLVFFFS…GAMAAQELRR (129 aa)). Residues His123 and Tyr127 each coordinate heme.

Belongs to the CcmE/CycJ family.

The protein resides in the cell inner membrane. Its function is as follows. Heme chaperone required for the biogenesis of c-type cytochromes. Transiently binds heme delivered by CcmC and transfers the heme to apo-cytochromes in a process facilitated by CcmF and CcmH. In Cupriavidus taiwanensis (strain DSM 17343 / BCRC 17206 / CCUG 44338 / CIP 107171 / LMG 19424 / R1) (Ralstonia taiwanensis (strain LMG 19424)), this protein is Cytochrome c-type biogenesis protein CcmE.